The primary structure comprises 127 residues: Large ribosomal subunit protein uL18 (127 aa).

Belongs to the universal ribosomal protein uL18 family. Part of the 50S ribosomal subunit; part of the 5S rRNA/L5/L18/L25 subcomplex. Contacts the 5S and 23S rRNAs.

This is one of the proteins that bind and probably mediate the attachment of the 5S RNA into the large ribosomal subunit, where it forms part of the central protuberance. The protein is Large ribosomal subunit protein uL18 of Streptomyces griseus subsp. griseus (strain JCM 4626 / CBS 651.72 / NBRC 13350 / KCC S-0626 / ISP 5235).